The sequence spans 594 residues: Putative diflavin flavoprotein A 4 (594 aa).

A zinc metallo-hydrolase region spans residues 57–250 (RRGTTSNSYL…LTLKMIAPGH (194 aa)). One can recognise a Flavodoxin-like domain in the interval 279–417 (VALIYASAYG…VCTTSGANFA (139 aa)). Residues 445–594 (VGRIIGSIGV…IRHRKSGGQY (150 aa)) form a flavodoxin-reductase-like region.

It in the N-terminal section; belongs to the zinc metallo-hydrolase group 3 family. In the C-terminal section; belongs to the flavodoxin reductase family. Requires Fe cation as cofactor.

In terms of biological role, mediates electron transfer from NADH to oxygen, reducing it to water. This modular protein has 3 redox cofactors, in other organisms the same activity requires 2 or 3 proteins. The chain is Putative diflavin flavoprotein A 4 (dfa4) from Synechocystis sp. (strain ATCC 27184 / PCC 6803 / Kazusa).